Here is a 246-residue protein sequence, read N- to C-terminus: DNA repair protein RecO (246 aa).

This sequence belongs to the RecO family.

In terms of biological role, involved in DNA repair and RecF pathway recombination. The polypeptide is DNA repair protein RecO (Proteus mirabilis (strain HI4320)).